Here is a 747-residue protein sequence, read N- to C-terminus: Flowering time control protein FCA (747 aa).

Residues 80–101 (YSVRPTTPPVQQPLSGQKRGYP) form a disordered region. RRM domains are found at residues 120-201 (VKLF…YADG) and 211-291 (FKLF…FAEP). Over residues 291-301 (PKRPKPGESRE) the composition is skewed to basic and acidic residues. Positions 291–503 (PKRPKPGESR…QQPLQKMQHP (213 aa)) are disordered. 2 stretches are compositionally biased toward polar residues: residues 320–353 (RPTS…SNTG) and 395–406 (SSSATLQQQNRA). Residues 448-460 (SSQLPTSQLPPQQ) show a composition bias toward low complexity. Residues 461-498 (NISRATAPQTPLNINLRPTTVSSATVQFPPRSQQQPLQ) show a composition bias toward polar residues. Positions 591 to 624 (GSVKCTWTEHTSPDGFKYYYNGLTGESKWEKPEE) constitute a WW domain. Residues 630 to 641 (REQQKQQQHQEK) show a composition bias toward basic and acidic residues. Disordered regions lie at residues 630 to 707 (REQQ…SGIG) and 722 to 747 (AASM…KNKA). Residues 642 to 673 (PTIQQSQTQLQPLQQQPQQVQQQYQGQQLQQP) are compositionally biased toward low complexity. Polar residues-rich tracts occupy residues 674–707 (FYSS…SGIG) and 726–739 (NDIS…QSPQ).

In terms of assembly, interacts (via C-terminus) with SWI3B and (via WW domain) with FY (via PPLPP motifs). As to expression, constitutively expressed, but the negative feedback maintains the active isoform a low level throughout much of the plant, except in meristematic cells at a specific time in development.

It is found in the nucleus. In terms of biological role, plays a major role in the promotion of the transition of the vegetative meristem to reproductive development. Plays a role in the regulation of flowering time in the autonomous flowering pathway by decreasing FLOWERING LOCUS C mRNA levels. Required for RNA-mediated chromatin silencing of a range of loci in the genome. Cotranscriptionally recognizes aberrant RNA and marks it for silencing. Controls alternative cleavage and polyadenylation on pre-mRNAs and antisense RNAs. Acts redundantly with FPA to prevent the expression of distally polyadenylated antisense RNAs at the FLC locus. This Arabidopsis thaliana (Mouse-ear cress) protein is Flowering time control protein FCA (FCA).